Here is a 310-residue protein sequence, read N- to C-terminus: Imidazolonepropionase (310 aa).

4-imidazolone-5-propanoate-binding residues include Tyr-42 and His-75. Tyr-42 provides a ligand contact to N-formimidoyl-L-glutamate. Residue His-140 participates in Fe(3+) binding. Residue His-140 participates in Zn(2+) binding. Position 143 (Glu-143) interacts with 4-imidazolone-5-propanoate. Asp-215 is a Fe(3+) binding site. Asp-215 lines the Zn(2+) pocket. 2 residues coordinate N-formimidoyl-L-glutamate: Asn-217 and Gly-219. Ser-220 is a binding site for 4-imidazolone-5-propanoate.

The protein belongs to the metallo-dependent hydrolases superfamily. HutI family. Requires Zn(2+) as cofactor. Fe(3+) is required as a cofactor.

The protein resides in the cytoplasm. The enzyme catalyses 4-imidazolone-5-propanoate + H2O = N-formimidoyl-L-glutamate. It participates in amino-acid degradation; L-histidine degradation into L-glutamate; N-formimidoyl-L-glutamate from L-histidine: step 3/3. In terms of biological role, catalyzes the hydrolytic cleavage of the carbon-nitrogen bond in imidazolone-5-propanoate to yield N-formimidoyl-L-glutamate. It is the third step in the universal histidine degradation pathway. This is Imidazolonepropionase (hutI) from Streptococcus gordonii.